A 293-amino-acid polypeptide reads, in one-letter code: ADP-forming sulfoacetate-CoA ligase subunit SauD (293 aa).

CoA-binding positions include 17–20, Lys-43, and 96–98; these read TGKE and IAD. The active-site Tele-phosphohistidine intermediate is His-251.

The protein belongs to the succinate/malate CoA ligase alpha subunit family. As to quaternary structure, forms a complex with SauC.

The catalysed reaction is sulfoacetate + ATP + CoA = sulfoacetyl-CoA + ADP + phosphate. Its function is as follows. Involved in the degradation of sulfoacetate. Catalyzes the CoA- and ATP-dependent conversion of sulfoacetate to sulfoacetyl-CoA and ADP. Cannot use other sulfonic and carboxylic acids, and shows only residual activity with 3-sulfopropanoate and malonic acid. This Bilophila wadsworthia (strain 3_1_6) protein is ADP-forming sulfoacetate-CoA ligase subunit SauD.